The following is a 193-amino-acid chain: MFAVLKTGGKQYKVQAGDVLRVEKLAADAGEKVQFNDVLMLGGDAPVVGAPLVDGAAVQAEVIDQIKGEKLIHFVKRRRKHSSQRTKGHRQKLTLVRITEILTSGADKTGVKAATGQAAAGAAAPAAAAPAAAGSDDLTKITGVGPAAAKKLVEAGIGSFAALAALSDEQIAAIDAVKVKPEWVEQAKELAQG.

This sequence belongs to the bacterial ribosomal protein bL21 family. As to quaternary structure, part of the 50S ribosomal subunit. Contacts protein L20.

In terms of biological role, this protein binds to 23S rRNA in the presence of protein L20. The protein is Large ribosomal subunit protein bL21 of Ruegeria pomeroyi (strain ATCC 700808 / DSM 15171 / DSS-3) (Silicibacter pomeroyi).